Reading from the N-terminus, the 322-residue chain is Ribose-phosphate pyrophosphokinase 1 (322 aa).

ATP contacts are provided by residues 39 to 41 (DGE) and 98 to 99 (RQ). Residues His132 and Asp173 each contribute to the Mg(2+) site. Residue Lys196 is part of the active site. D-ribose 5-phosphate contacts are provided by residues Arg198, Asp224, and 228–232 (DTAGT).

This sequence belongs to the ribose-phosphate pyrophosphokinase family. Class I subfamily. As to quaternary structure, homohexamer. Mg(2+) serves as cofactor.

It localises to the cytoplasm. It carries out the reaction D-ribose 5-phosphate + ATP = 5-phospho-alpha-D-ribose 1-diphosphate + AMP + H(+). It functions in the pathway metabolic intermediate biosynthesis; 5-phospho-alpha-D-ribose 1-diphosphate biosynthesis; 5-phospho-alpha-D-ribose 1-diphosphate from D-ribose 5-phosphate (route I): step 1/1. In terms of biological role, involved in the biosynthesis of the central metabolite phospho-alpha-D-ribosyl-1-pyrophosphate (PRPP) via the transfer of pyrophosphoryl group from ATP to 1-hydroxyl of ribose-5-phosphate (Rib-5-P). In Streptococcus pneumoniae serotype 4 (strain ATCC BAA-334 / TIGR4), this protein is Ribose-phosphate pyrophosphokinase 1.